A 100-amino-acid polypeptide reads, in one-letter code: Aspartyl/glutamyl-tRNA(Asn/Gln) amidotransferase subunit C (100 aa).

This sequence belongs to the GatC family. As to quaternary structure, heterotrimer of A, B and C subunits.

It carries out the reaction L-glutamyl-tRNA(Gln) + L-glutamine + ATP + H2O = L-glutaminyl-tRNA(Gln) + L-glutamate + ADP + phosphate + H(+). It catalyses the reaction L-aspartyl-tRNA(Asn) + L-glutamine + ATP + H2O = L-asparaginyl-tRNA(Asn) + L-glutamate + ADP + phosphate + 2 H(+). Functionally, allows the formation of correctly charged Asn-tRNA(Asn) or Gln-tRNA(Gln) through the transamidation of misacylated Asp-tRNA(Asn) or Glu-tRNA(Gln) in organisms which lack either or both of asparaginyl-tRNA or glutaminyl-tRNA synthetases. The reaction takes place in the presence of glutamine and ATP through an activated phospho-Asp-tRNA(Asn) or phospho-Glu-tRNA(Gln). This Streptococcus pneumoniae (strain P1031) protein is Aspartyl/glutamyl-tRNA(Asn/Gln) amidotransferase subunit C.